The chain runs to 349 residues: Protein FAM98C (349 aa).

Positions Pro313 to Lys349 are disordered.

Belongs to the FAM98 family.

This chain is Protein FAM98C (FAM98C), found in Homo sapiens (Human).